We begin with the raw amino-acid sequence, 369 residues long: Glutamate 5-kinase (369 aa).

ATP is bound at residue Lys7. Substrate-binding residues include Ser48, Asp135, and Asn147. ATP contacts are provided by residues Thr167–Asp168 and Ser208–Lys214. A PUA domain is found at Ala275–Glu353.

This sequence belongs to the glutamate 5-kinase family.

It is found in the cytoplasm. The catalysed reaction is L-glutamate + ATP = L-glutamyl 5-phosphate + ADP. It participates in amino-acid biosynthesis; L-proline biosynthesis; L-glutamate 5-semialdehyde from L-glutamate: step 1/2. Its function is as follows. Catalyzes the transfer of a phosphate group to glutamate to form L-glutamate 5-phosphate. The polypeptide is Glutamate 5-kinase (Gloeobacter violaceus (strain ATCC 29082 / PCC 7421)).